A 352-amino-acid polypeptide reads, in one-letter code: NAD(+)-dependent homoserine dehydrogenase (352 aa).

The protein belongs to the homoserine dehydrogenase family.

The catalysed reaction is L-homoserine + NAD(+) = L-aspartate 4-semialdehyde + NADH + H(+). Its function is as follows. Dehydrogenase involved in the degradation of canavanine, the delta-oxa-analog of arginine, allowing growth on canavanine as sole nitrogen and carbon source. Catalyzes the conversion of homoserine and NAD(+) to aspartate-semialdehyde and NADH. Is highly specific for NAD(+) and cannot use NADP(+). In Pseudomonas canavaninivorans, this protein is NAD(+)-dependent homoserine dehydrogenase.